A 469-amino-acid chain; its full sequence is Cysteine--tRNA ligase (469 aa).

Cysteine 28 serves as a coordination point for Zn(2+). The short motif at 30–40 (CTVYDLCHIGH) is the 'HIGH' region element. The Zn(2+) site is built by cysteine 216, histidine 241, and glutamate 245. The 'KMSKS' region motif lies at 273–277 (KMSKS). Lysine 276 is an ATP binding site.

The protein belongs to the class-I aminoacyl-tRNA synthetase family. Monomer. The cofactor is Zn(2+).

It localises to the cytoplasm. It catalyses the reaction tRNA(Cys) + L-cysteine + ATP = L-cysteinyl-tRNA(Cys) + AMP + diphosphate. The sequence is that of Cysteine--tRNA ligase from Colwellia psychrerythraea (strain 34H / ATCC BAA-681) (Vibrio psychroerythus).